The primary structure comprises 130 residues: UPF0102 protein TDE_2303 (130 aa).

It belongs to the UPF0102 family.

The polypeptide is UPF0102 protein TDE_2303 (Treponema denticola (strain ATCC 35405 / DSM 14222 / CIP 103919 / JCM 8153 / KCTC 15104)).